Here is a 433-residue protein sequence, read N- to C-terminus: Enolase (433 aa).

Glutamine 167 is a binding site for (2R)-2-phosphoglycerate. The active-site Proton donor is the glutamate 209. Positions 246, 291, and 318 each coordinate Mg(2+). The (2R)-2-phosphoglycerate site is built by lysine 343, arginine 372, serine 373, and lysine 394. Lysine 343 functions as the Proton acceptor in the catalytic mechanism.

This sequence belongs to the enolase family. As to quaternary structure, component of the RNA degradosome, a multiprotein complex involved in RNA processing and mRNA degradation. The cofactor is Mg(2+).

It is found in the cytoplasm. The protein localises to the secreted. Its subcellular location is the cell surface. The catalysed reaction is (2R)-2-phosphoglycerate = phosphoenolpyruvate + H2O. It functions in the pathway carbohydrate degradation; glycolysis; pyruvate from D-glyceraldehyde 3-phosphate: step 4/5. In terms of biological role, catalyzes the reversible conversion of 2-phosphoglycerate (2-PG) into phosphoenolpyruvate (PEP). It is essential for the degradation of carbohydrates via glycolysis. This is Enolase from Marinomonas sp. (strain MWYL1).